The chain runs to 50 residues: Small integral membrane protein 46 (50 aa).

Residues 15 to 37 (TTFQLWLQLLLWAHLAVRFLGYL) form a helical membrane-spanning segment.

It localises to the membrane. The chain is Small integral membrane protein 46 from Homo sapiens (Human).